A 68-amino-acid chain; its full sequence is Large ribosomal subunit protein uL29 (68 aa).

This sequence belongs to the universal ribosomal protein uL29 family.

In Archaeoglobus fulgidus (strain ATCC 49558 / DSM 4304 / JCM 9628 / NBRC 100126 / VC-16), this protein is Large ribosomal subunit protein uL29 (rpl29).